We begin with the raw amino-acid sequence, 508 residues long: MQLTLWTYEGPPHVGAMRVAAAMKDVHYVLHAPQGDTYADLLFTMIERRESRPPVTYTTFEARDLGGDTAALFQRTAQEAYERFKPKALLVGSSCTAELIQDDPGGLARGLGLPVPVIPLEFSAYQRKENFGASLTFYNLVRAFAKALATPRATRSAARPSCNLLGATALGFRHRDDIREVTLLLDRLGVGVNICAPLGASPDDLARLPEADFNIVLYPEVALEAAEWLKRTHRQPLVKTQPIGVGATHAFIEEVARLAGLDPRPLLGPAESRLEWYSRSVDSTYLTGKRVFIFGDATHAIAAARVASRELGFTVAGLGSYSREFAREMRAAAALYSLNALITDDYLEVEAEIERLQPELVLGTQMERHIAKRLGIPCAVISAPVHVQDFPARHSPQMVFEGANVIFDSWVHPLMMGLEEHLLTMFRGDEEFHDEAAPSHLGVAVATAQATHTPAILAWDAGAERELKSIPFFVRGKARRNTERYAQERGLPLITIETLYDAKAHYSR.

Residue Asp36 participates in [4Fe-4S] cluster binding. Asp282 acts as the Proton donor in catalysis. Residue 417 to 418 (GL) coordinates substrate.

This sequence belongs to the ChlB/BchB/BchZ family. In terms of assembly, protochlorophyllide reductase is composed of three subunits; BchL, BchN and BchB. Forms a heterotetramer of two BchB and two BchN subunits. Requires [4Fe-4S] cluster as cofactor.

The enzyme catalyses chlorophyllide a + oxidized 2[4Fe-4S]-[ferredoxin] + 2 ADP + 2 phosphate = protochlorophyllide a + reduced 2[4Fe-4S]-[ferredoxin] + 2 ATP + 2 H2O. It participates in porphyrin-containing compound metabolism; bacteriochlorophyll biosynthesis (light-independent). Functionally, component of the dark-operative protochlorophyllide reductase (DPOR) that uses Mg-ATP and reduced ferredoxin to reduce ring D of protochlorophyllide (Pchlide) to form chlorophyllide a (Chlide). This reaction is light-independent. The NB-protein (BchN-BchB) is the catalytic component of the complex. The polypeptide is Light-independent protochlorophyllide reductase subunit B (Methylocella silvestris (strain DSM 15510 / CIP 108128 / LMG 27833 / NCIMB 13906 / BL2)).